We begin with the raw amino-acid sequence, 477 residues long: Ribulose bisphosphate carboxylase large chain (477 aa).

Positions 1–2 (MS) are excised as a propeptide. The residue at position 3 (Pro-3) is an N-acetylproline. Position 14 is an N6,N6,N6-trimethyllysine (Lys-14). 2 residues coordinate substrate: Asn-123 and Thr-173. The active-site Proton acceptor is the Lys-175. A substrate-binding site is contributed by Lys-177. 3 residues coordinate Mg(2+): Lys-201, Asp-203, and Glu-204. Lys-201 carries the post-translational modification N6-carboxylysine. His-294 serves as the catalytic Proton acceptor. Substrate is bound by residues Arg-295, His-327, and Ser-379.

The protein belongs to the RuBisCO large chain family. Type I subfamily. In terms of assembly, heterohexadecamer of 8 large chains and 8 small chains; disulfide-linked. The disulfide link is formed within the large subunit homodimers. It depends on Mg(2+) as a cofactor. The disulfide bond which can form in the large chain dimeric partners within the hexadecamer appears to be associated with oxidative stress and protein turnover.

The protein localises to the plastid. It is found in the chloroplast. The enzyme catalyses 2 (2R)-3-phosphoglycerate + 2 H(+) = D-ribulose 1,5-bisphosphate + CO2 + H2O. The catalysed reaction is D-ribulose 1,5-bisphosphate + O2 = 2-phosphoglycolate + (2R)-3-phosphoglycerate + 2 H(+). Its function is as follows. RuBisCO catalyzes two reactions: the carboxylation of D-ribulose 1,5-bisphosphate, the primary event in carbon dioxide fixation, as well as the oxidative fragmentation of the pentose substrate in the photorespiration process. Both reactions occur simultaneously and in competition at the same active site. This chain is Ribulose bisphosphate carboxylase large chain, found in Oryza nivara (Indian wild rice).